We begin with the raw amino-acid sequence, 425 residues long: Dihydroorotase (425 aa).

Zn(2+) contacts are provided by histidine 56 and histidine 58. Residues 58 to 60 (HYR) and asparagine 90 contribute to the substrate site. The Zn(2+) site is built by aspartate 148, histidine 175, and histidine 228. Asparagine 274 provides a ligand contact to substrate. Aspartate 301 contributes to the Zn(2+) binding site. Residue aspartate 301 is part of the active site. Substrate contacts are provided by residues histidine 305 and 319-320 (FG).

The protein belongs to the metallo-dependent hydrolases superfamily. DHOase family. Class I DHOase subfamily. Zn(2+) is required as a cofactor.

The enzyme catalyses (S)-dihydroorotate + H2O = N-carbamoyl-L-aspartate + H(+). Its pathway is pyrimidine metabolism; UMP biosynthesis via de novo pathway; (S)-dihydroorotate from bicarbonate: step 3/3. Functionally, catalyzes the reversible cyclization of carbamoyl aspartate to dihydroorotate. This Lactobacillus gasseri (strain ATCC 33323 / DSM 20243 / BCRC 14619 / CIP 102991 / JCM 1131 / KCTC 3163 / NCIMB 11718 / NCTC 13722 / AM63) protein is Dihydroorotase.